We begin with the raw amino-acid sequence, 287 residues long: MRIVIITGLSGSGKSTAVRALEDEGFFCLDNLPVSLVTTFIELVEHSREDIKDVALVMDIRSRDFIKGYDQVFQAMASAGHSVKIFYFDATDEVLIRRFSETRRRHPALEGASVPEGIRFERDQLAGLRRIATAIIDTSEMNVHRLKELVIGLVKGGEGVLEMQVNLQSFGFRYGLPLESDLVMDVRFLPNPYFVATLRPFSGLDQGVREYVMGHKETVVFLEHFRNMLELLLPSYRREGKSYLSVSIGCTGGRHRSVAIAEELYNYFRQRNVNIKITHRDIDKGLG.

Position 8–15 (8–15 (GLSGSGKS)) interacts with ATP. 59–62 (DIRS) contributes to the GTP binding site.

This sequence belongs to the RapZ-like family.

Functionally, displays ATPase and GTPase activities. The polypeptide is Nucleotide-binding protein GM21_3387 (Geobacter sp. (strain M21)).